Here is an 801-residue protein sequence, read N- to C-terminus: Endonuclease MutS2 (801 aa).

336 to 343 (GPNTGGKT) lines the ATP pocket. The tract at residues 696–721 (AQQSKAKQKQQKIVKTKTASGSARAT) is disordered. A compositionally biased stretch (basic residues) spans 701–710 (AKQKQQKIVK). Residues 726–801 (LDLRGVRYEA…GDGATIAELS (76 aa)) form the Smr domain.

It belongs to the DNA mismatch repair MutS family. MutS2 subfamily. As to quaternary structure, homodimer. Binds to stalled ribosomes, contacting rRNA.

In terms of biological role, endonuclease that is involved in the suppression of homologous recombination and thus may have a key role in the control of bacterial genetic diversity. Acts as a ribosome collision sensor, splitting the ribosome into its 2 subunits. Detects stalled/collided 70S ribosomes which it binds and splits by an ATP-hydrolysis driven conformational change. Acts upstream of the ribosome quality control system (RQC), a ribosome-associated complex that mediates the extraction of incompletely synthesized nascent chains from stalled ribosomes and their subsequent degradation. Probably generates substrates for RQC. The chain is Endonuclease MutS2 from Leuconostoc citreum (strain KM20).